The primary structure comprises 419 residues: MDKLLIKASKPLQGSVRISGAKNAALPILMSSILADTTCYFDNVPELRDINTSLALLAELGADAKRVSGHAVEIDPSSINNCNASYDLVKTMRASILVLGPLLAKYGEANVSLPGGCAIGARPVNLHLQGLEKMGAKIDVEAGYIRAKVDGRLKGANIFMDMVSVGATENLMMAACLADGETVLENAAREPEIVDLANCLNAMGAKVTHAGSDKIRIQGVERLQGCRYAVLPDRIETGTFLIAAAVTGGKIRCENAAPETLDAVLDKLVMAGAVITTGDDWIELDMQGHPLTSVNIKTAPHPGFPTDMQAQFVALNCVAQGTGVVTENIFENRFMHVPELQRMGAKIDLETNSAVCHGVSSLKGAQVMATDLRASASLVIAGLVAEGETVVDRIYHLDRGYEHIETKLNGLGANIQRIK.

22–23 (KN) contributes to the phosphoenolpyruvate binding site. Residue arginine 93 coordinates UDP-N-acetyl-alpha-D-glucosamine. The Proton donor role is filled by cysteine 117. Residue cysteine 117 is modified to 2-(S-cysteinyl)pyruvic acid O-phosphothioketal. UDP-N-acetyl-alpha-D-glucosamine is bound by residues aspartate 307 and isoleucine 329.

Belongs to the EPSP synthase family. MurA subfamily.

Its subcellular location is the cytoplasm. The enzyme catalyses phosphoenolpyruvate + UDP-N-acetyl-alpha-D-glucosamine = UDP-N-acetyl-3-O-(1-carboxyvinyl)-alpha-D-glucosamine + phosphate. Its pathway is cell wall biogenesis; peptidoglycan biosynthesis. Functionally, cell wall formation. Adds enolpyruvyl to UDP-N-acetylglucosamine. This is UDP-N-acetylglucosamine 1-carboxyvinyltransferase from Pseudoalteromonas atlantica (strain T6c / ATCC BAA-1087).